The sequence spans 194 residues: Threonylcarbamoyl-AMP synthase (194 aa).

One can recognise a YrdC-like domain in the interval 11 to 194; sequence FRNLMKIINA…GINYKIIRKG (184 aa).

It belongs to the SUA5 family. TsaC subfamily.

The protein localises to the cytoplasm. The catalysed reaction is L-threonine + hydrogencarbonate + ATP = L-threonylcarbamoyladenylate + diphosphate + H2O. In terms of biological role, required for the formation of a threonylcarbamoyl group on adenosine at position 37 (t(6)A37) in tRNAs that read codons beginning with adenine. Catalyzes the conversion of L-threonine, HCO(3)(-)/CO(2) and ATP to give threonylcarbamoyl-AMP (TC-AMP) as the acyladenylate intermediate, with the release of diphosphate. This chain is Threonylcarbamoyl-AMP synthase, found in Wigglesworthia glossinidia brevipalpis.